The primary structure comprises 206 residues: 2,3-bisphosphoglycerate-dependent phosphoglycerate mutase (206 aa).

Substrate-binding positions include 9 to 16 (RHGQSEWN), 22 to 23 (TG), arginine 61, 88 to 91 (ERDY), lysine 99, 115 to 116 (RR), and 159 to 160 (GN). Histidine 10 functions as the Tele-phosphohistidine intermediate in the catalytic mechanism. Glutamate 88 serves as the catalytic Proton donor/acceptor.

It belongs to the phosphoglycerate mutase family. BPG-dependent PGAM subfamily. Homodimer.

The catalysed reaction is (2R)-2-phosphoglycerate = (2R)-3-phosphoglycerate. It participates in carbohydrate degradation; glycolysis; pyruvate from D-glyceraldehyde 3-phosphate: step 3/5. Its function is as follows. Catalyzes the interconversion of 2-phosphoglycerate and 3-phosphoglycerate. In Bartonella bacilliformis (strain ATCC 35685 / KC583 / Herrer 020/F12,63), this protein is 2,3-bisphosphoglycerate-dependent phosphoglycerate mutase.